A 118-amino-acid chain; its full sequence is DNA-binding protein YG5714_1868 (118 aa).

The protein belongs to the PDCD5 family.

This Saccharolobus islandicus (strain Y.G.57.14 / Yellowstone #1) (Sulfolobus islandicus) protein is DNA-binding protein YG5714_1868.